A 149-amino-acid chain; its full sequence is Deoxyuridine 5'-triphosphate nucleotidohydrolase (149 aa).

Substrate-binding positions include 68–70, asparagine 81, 85–87, and lysine 95; these read RSG and TVD.

This sequence belongs to the dUTPase family. Mg(2+) serves as cofactor.

The catalysed reaction is dUTP + H2O = dUMP + diphosphate + H(+). It functions in the pathway pyrimidine metabolism; dUMP biosynthesis; dUMP from dCTP (dUTP route): step 2/2. Its function is as follows. This enzyme is involved in nucleotide metabolism: it produces dUMP, the immediate precursor of thymidine nucleotides and it decreases the intracellular concentration of dUTP so that uracil cannot be incorporated into DNA. The protein is Deoxyuridine 5'-triphosphate nucleotidohydrolase of Neorickettsia sennetsu (strain ATCC VR-367 / Miyayama) (Ehrlichia sennetsu).